The primary structure comprises 388 residues: NADH-quinone oxidoreductase subunit D 2 (388 aa).

Belongs to the complex I 49 kDa subunit family. In terms of assembly, NDH-1 is composed of 14 different subunits. Subunits NuoB, C, D, E, F, and G constitute the peripheral sector of the complex.

Its subcellular location is the cell membrane. It catalyses the reaction a quinone + NADH + 5 H(+)(in) = a quinol + NAD(+) + 4 H(+)(out). NDH-1 shuttles electrons from NADH, via FMN and iron-sulfur (Fe-S) centers, to quinones in the respiratory chain. The immediate electron acceptor for the enzyme in this species is believed to be a menaquinone. Couples the redox reaction to proton translocation (for every two electrons transferred, four hydrogen ions are translocated across the cytoplasmic membrane), and thus conserves the redox energy in a proton gradient. In Salinispora tropica (strain ATCC BAA-916 / DSM 44818 / JCM 13857 / NBRC 105044 / CNB-440), this protein is NADH-quinone oxidoreductase subunit D 2.